We begin with the raw amino-acid sequence, 156 residues long: Cell division protein SepF (156 aa).

The tract at residues 17 to 44 (PETADYYEDQQPAQQAPAPVPTPAPTRS) is disordered.

It belongs to the SepF family. In terms of assembly, homodimer. Interacts with FtsZ.

The protein localises to the cytoplasm. Cell division protein that is part of the divisome complex and is recruited early to the Z-ring. Probably stimulates Z-ring formation, perhaps through the cross-linking of FtsZ protofilaments. Its function overlaps with FtsA. This chain is Cell division protein SepF, found in Limosilactobacillus fermentum (strain NBRC 3956 / LMG 18251) (Lactobacillus fermentum).